A 197-amino-acid chain; its full sequence is Beta-crystallin A2 (197 aa).

Residues methionine 1 to proline 11 form an N-terminal arm region. Beta/gamma crystallin 'Greek key' domains follow at residues alanine 12–asparagine 52 and glycine 53–leucine 99. Positions cysteine 100–aspartate 105 are connecting peptide. Beta/gamma crystallin 'Greek key' domains lie at serine 106–serine 147 and glycine 148–glutamine 196.

Belongs to the beta/gamma-crystallin family. As to quaternary structure, homo/heterodimer, or complexes of higher-order. The structure of beta-crystallin oligomers seems to be stabilized through interactions between the N-terminal arms.

In terms of biological role, crystallins are the dominant structural components of the vertebrate eye lens. The chain is Beta-crystallin A2 (CRYBA2) from Bos taurus (Bovine).